The primary structure comprises 411 residues: Acetylornithine aminotransferase (411 aa).

Residues 107 to 108 (GT) and phenylalanine 141 each bind pyridoxal 5'-phosphate. Residue arginine 144 coordinates N(2)-acetyl-L-ornithine. Position 227–230 (227–230 (DEIQ)) interacts with pyridoxal 5'-phosphate. Lysine 256 carries the post-translational modification N6-(pyridoxal phosphate)lysine. Threonine 284 contacts N(2)-acetyl-L-ornithine. Threonine 285 lines the pyridoxal 5'-phosphate pocket.

The protein belongs to the class-III pyridoxal-phosphate-dependent aminotransferase family. ArgD subfamily. Homodimer. Pyridoxal 5'-phosphate serves as cofactor.

Its subcellular location is the cytoplasm. It carries out the reaction N(2)-acetyl-L-ornithine + 2-oxoglutarate = N-acetyl-L-glutamate 5-semialdehyde + L-glutamate. It functions in the pathway amino-acid biosynthesis; L-arginine biosynthesis; N(2)-acetyl-L-ornithine from L-glutamate: step 4/4. The chain is Acetylornithine aminotransferase from Xylella fastidiosa (strain 9a5c).